The primary structure comprises 133 residues: Profilin (133 aa).

It belongs to the profilin family. In terms of assembly, occurs in many kinds of cells as a complex with monomeric actin in a 1:1 ratio.

The protein resides in the cytoplasm. It localises to the cytoskeleton. In terms of biological role, binds to actin and affects the structure of the cytoskeleton. At high concentrations, profilin prevents the polymerization of actin, whereas it enhances it at low concentrations. By binding to PIP2, it inhibits the formation of IP3 and DG. The chain is Profilin from Helianthus annuus (Common sunflower).